We begin with the raw amino-acid sequence, 571 residues long: Pectinesterase/pectinesterase inhibitor (571 aa).

The tract at residues 27 to 178 (NSHQKAVESL…KILSSNAIDI (152 aa)) is pectinesterase inhibitor. Residues 233 to 254 (AQAGRPGAPADEGIGEGGGGGG) form a disordered region. A pectinesterase region spans residues 259–558 (THVVAKDGSG…TVANWLTPAN (300 aa)). Substrate-binding residues include threonine 336 and glutamine 366. Aspartate 389 functions as the Proton donor; for pectinesterase activity in the catalytic mechanism. Aspartate 410 acts as the Nucleophile; for pectinesterase activity in catalysis. 2 residues coordinate substrate: arginine 479 and tryptophan 481.

In the N-terminal section; belongs to the PMEI family. The protein in the C-terminal section; belongs to the pectinesterase family.

Its subcellular location is the secreted. It localises to the cell wall. It catalyses the reaction [(1-&gt;4)-alpha-D-galacturonosyl methyl ester](n) + n H2O = [(1-&gt;4)-alpha-D-galacturonosyl](n) + n methanol + n H(+). It functions in the pathway glycan metabolism; pectin degradation; 2-dehydro-3-deoxy-D-gluconate from pectin: step 1/5. Its function is as follows. Acts in the modification of cell walls via demethylesterification of cell wall pectin. This is Pectinesterase/pectinesterase inhibitor from Brassica campestris (Field mustard).